Here is a 105-residue protein sequence, read N- to C-terminus: Large ribosomal subunit protein uL24 (105 aa).

It belongs to the universal ribosomal protein uL24 family. Part of the 50S ribosomal subunit.

Its function is as follows. One of two assembly initiator proteins, it binds directly to the 5'-end of the 23S rRNA, where it nucleates assembly of the 50S subunit. Functionally, one of the proteins that surrounds the polypeptide exit tunnel on the outside of the subunit. This Francisella tularensis subsp. novicida (strain U112) protein is Large ribosomal subunit protein uL24.